Here is a 668-residue protein sequence, read N- to C-terminus: uncharacterized protein (668 aa).

The next 9 helical transmembrane spans lie at 182 to 202, 208 to 228, 286 to 306, 321 to 341, 379 to 399, 430 to 450, 499 to 519, 557 to 577, and 587 to 607; these read FAFA…GILG, PYSY…IQFW, VPLF…AFIV, IVSL…TFIY, ALFL…PHYI, IYFL…VPQL, FVLM…APIF, LSLL…FYSS, and VIAA…RMFI.

It is found in the membrane. This is an uncharacterized protein from Schizosaccharomyces pombe (strain 972 / ATCC 24843) (Fission yeast).